Consider the following 290-residue polypeptide: N-acetylmannosamine kinase (290 aa).

ATP is bound by residues 6–13 and 132–139; these read ALDIGGTK and GVGGGIIL. Residues H156, C166, C168, and C173 each coordinate Zn(2+).

The protein belongs to the ROK (NagC/XylR) family. NanK subfamily. In terms of assembly, homodimer.

It catalyses the reaction an N-acyl-D-mannosamine + ATP = an N-acyl-D-mannosamine 6-phosphate + ADP + H(+). It functions in the pathway amino-sugar metabolism; N-acetylneuraminate degradation; D-fructose 6-phosphate from N-acetylneuraminate: step 2/5. Functionally, catalyzes the phosphorylation of N-acetylmannosamine (ManNAc) to ManNAc-6-P. This is N-acetylmannosamine kinase from Yersinia pseudotuberculosis serotype O:1b (strain IP 31758).